Reading from the N-terminus, the 351-residue chain is Dihydroorotate dehydrogenase (quinone) (351 aa).

Residues 67 to 71 (AGFDK) and Thr-91 contribute to the FMN site. Lys-71 provides a ligand contact to substrate. Position 116–120 (116–120 (NAMGF)) interacts with substrate. Positions 145 and 178 each coordinate FMN. Substrate is bound at residue Asn-178. The active-site Nucleophile is the Ser-181. Asn-183 is a binding site for substrate. Lys-214 and Thr-242 together coordinate FMN. 243–244 (NT) contributes to the substrate binding site. Residues Gly-262, Gly-291, and 312 to 313 (YS) contribute to the FMN site.

The protein belongs to the dihydroorotate dehydrogenase family. Type 2 subfamily. In terms of assembly, monomer. FMN serves as cofactor.

Its subcellular location is the cell membrane. The catalysed reaction is (S)-dihydroorotate + a quinone = orotate + a quinol. The protein operates within pyrimidine metabolism; UMP biosynthesis via de novo pathway; orotate from (S)-dihydroorotate (quinone route): step 1/1. Functionally, catalyzes the conversion of dihydroorotate to orotate with quinone as electron acceptor. In Helicobacter pylori (strain HPAG1), this protein is Dihydroorotate dehydrogenase (quinone).